We begin with the raw amino-acid sequence, 85 residues long: U4-theraphotoxin-Hhn1a (85 aa).

The signal sequence occupies residues 1–22; the sequence is MKVTLIAILTCAAVLVLHTTAA. Residues 23-48 constitute a propeptide that is removed on maturation; it reads EEFEAESQLMEVGMPDTELAAVDEER. 3 disulfides stabilise this stretch: Cys52-Cys66, Cys56-Cys77, and Cys71-Cys82.

The protein belongs to the neurotoxin 12 (Hwtx-2) family. 02 (Hwtx-2) subfamily. Monomer. Expressed by the venom gland.

Its subcellular location is the secreted. Neurotoxin active on both insects and mammals. The polypeptide is U4-theraphotoxin-Hhn1a (Cyriopagopus hainanus (Chinese bird spider)).